A 355-amino-acid chain; its full sequence is Protein-glutamate methylesterase/protein-glutamine glutaminase 3 (355 aa).

In terms of domain architecture, Response regulatory spans 8-123; the sequence is SVLIVDDSGM…AREVEDFVDK (116 aa). Asp-59 carries the post-translational modification 4-aspartylphosphate. Positions 139-161 are disordered; sequence RSAPAAGPTPVPQAPPPPAAPPA. Pro residues predominate over residues 145–159; it reads GPTPVPQAPPPPAAP. Residues 160-350 enclose the CheB-type methylesterase domain; it reads PAGDGGIIAI…ASLLEITGAS (191 aa). Residues Ser-172, His-199, and Asp-292 contribute to the active site.

This sequence belongs to the CheB family. Post-translationally, phosphorylated by CheA. Phosphorylation of the N-terminal regulatory domain activates the methylesterase activity.

The protein resides in the cytoplasm. It carries out the reaction [protein]-L-glutamate 5-O-methyl ester + H2O = L-glutamyl-[protein] + methanol + H(+). It catalyses the reaction L-glutaminyl-[protein] + H2O = L-glutamyl-[protein] + NH4(+). In terms of biological role, involved in chemotaxis. Part of a chemotaxis signal transduction system that modulates chemotaxis in response to various stimuli. Catalyzes the demethylation of specific methylglutamate residues introduced into the chemoreceptors (methyl-accepting chemotaxis proteins or MCP) by CheR. Also mediates the irreversible deamidation of specific glutamine residues to glutamic acid. This Paramagnetospirillum magneticum (strain ATCC 700264 / AMB-1) (Magnetospirillum magneticum) protein is Protein-glutamate methylesterase/protein-glutamine glutaminase 3.